The chain runs to 398 residues: Carbamoyl phosphate synthase small chain (398 aa).

The CPSase stretch occupies residues 1 to 199 (MTPAWATEKP…WNEGFGEQAE (199 aa)). Residues Ser54, Gly251, and Gly253 each contribute to the L-glutamine site. The 189-residue stretch at 203–391 (HVVAIDYGVK…VNLIREKRGE (189 aa)) folds into the Glutamine amidotransferase type-1 domain. Catalysis depends on Cys280, which acts as the Nucleophile. 5 residues coordinate L-glutamine: Leu281, Gln284, Asn322, Gly324, and Phe325. Catalysis depends on residues His364 and Glu366.

It belongs to the CarA family. Composed of two chains; the small (or glutamine) chain promotes the hydrolysis of glutamine to ammonia, which is used by the large (or ammonia) chain to synthesize carbamoyl phosphate. Tetramer of heterodimers (alpha,beta)4.

The enzyme catalyses hydrogencarbonate + L-glutamine + 2 ATP + H2O = carbamoyl phosphate + L-glutamate + 2 ADP + phosphate + 2 H(+). It catalyses the reaction L-glutamine + H2O = L-glutamate + NH4(+). Its pathway is amino-acid biosynthesis; L-arginine biosynthesis; carbamoyl phosphate from bicarbonate: step 1/1. It functions in the pathway pyrimidine metabolism; UMP biosynthesis via de novo pathway; (S)-dihydroorotate from bicarbonate: step 1/3. Small subunit of the glutamine-dependent carbamoyl phosphate synthetase (CPSase). CPSase catalyzes the formation of carbamoyl phosphate from the ammonia moiety of glutamine, carbonate, and phosphate donated by ATP, constituting the first step of 2 biosynthetic pathways, one leading to arginine and/or urea and the other to pyrimidine nucleotides. The small subunit (glutamine amidotransferase) binds and cleaves glutamine to supply the large subunit with the substrate ammonia. The sequence is that of Carbamoyl phosphate synthase small chain from Mesorhizobium japonicum (strain LMG 29417 / CECT 9101 / MAFF 303099) (Mesorhizobium loti (strain MAFF 303099)).